The following is a 255-amino-acid chain: ATP synthase subunit a (255 aa).

Positions 1 to 6 (MNFIIN) are cleaved as a propeptide — removed in mature form. 5 consecutive transmembrane segments (helical) span residues 32-52 (LTSF…FSIL), 91-111 (LFPF…VSLV), 121-141 (LIWT…TGLA), 159-200 (PLVP…LAGL), and 219-251 (LSIL…IKDA).

In terms of assembly, F-type ATP synthases have 2 components, the catalytic core F(1) and the membrane-embedded component F(0), linked together by a central stalk and a peripheral stalk. The central stalk, also called rotor shaft, is often seen as part of F(1). The peripheral stalk is seen as part of F(0). F(0) contains the membrane channel next to the rotor. F-type ATP synthases form dimers but each monomer functions independently in ATP generation. The dimer consists of 17 different polypeptides: ATP1 (subunit alpha, 3 molecules per monomer, part of F(1)), ATP2 (subunit beta, 3 copies per monomer, part of F(1)), ATP3 (subunit gamma, part of the central stalk), ATP4 (subunit b, part of the peripheral stalk), ATP5/OSCP (subunit 5/OSCP, part of the peripheral stalk), ATP6 (subunit a, part of the peripheral stalk), ATP7 (subunit d, part of the peripheral stalk), ATP8 (subunit 8, part of the peripheral stalk), OLI1 (subunit c, part of the rotor, 10 molecules per monomer), ATP14 (subunit h, part of the peripheral stalk), ATP15 (subunit epsilon, part of the central stalk), ATP16 (subunit delta, part of the central stalk), ATP17 (subunit f, part of the peripheral stalk), ATP18 (subunit i/j, part of the peripheral stalk), ATP19 (subunit k, dimer-specific, at interface between monomers), ATP20 (subunit g, at interface between monomers), TIM11 (subunit e, at interface between monomers).

The protein resides in the mitochondrion inner membrane. Mitochondrial membrane ATP synthase (F(1)F(0) ATP synthase or Complex V) produces ATP from ADP in the presence of a proton gradient across the membrane which is generated by electron transport complexes of the respiratory chain. F-type ATP synthases consist of two structural domains, F(1) - containing the extramembraneous catalytic core, and F(0) - containing the membrane proton channel, linked together by a central stalk and a peripheral stalk. During catalysis, ATP synthesis in the catalytic domain of F(1) is coupled via a rotary mechanism of the central stalk subunits to proton translocation. Key component of the proton channel; it may play a direct role in the translocation of protons across the membrane. The protein is ATP synthase subunit a of Yarrowia lipolytica (strain CLIB 122 / E 150) (Yeast).